Reading from the N-terminus, the 328-residue chain is N-acetyl-gamma-glutamyl-phosphate reductase (328 aa).

C143 is a catalytic residue.

Belongs to the NAGSA dehydrogenase family. Type 1 subfamily.

It localises to the cytoplasm. The catalysed reaction is N-acetyl-L-glutamate 5-semialdehyde + phosphate + NADP(+) = N-acetyl-L-glutamyl 5-phosphate + NADPH + H(+). Its pathway is amino-acid biosynthesis; L-arginine biosynthesis; N(2)-acetyl-L-ornithine from L-glutamate: step 3/4. Its function is as follows. Catalyzes the NADPH-dependent reduction of N-acetyl-5-glutamyl phosphate to yield N-acetyl-L-glutamate 5-semialdehyde. In Methanoregula boonei (strain DSM 21154 / JCM 14090 / 6A8), this protein is N-acetyl-gamma-glutamyl-phosphate reductase.